Consider the following 2005-residue polypeptide: Sodium channel protein type 2 subunit alpha (2005 aa).

Topologically, residues 1–129 (MAQSVLVPPG…KLAIKILVHS (129 aa)) are cytoplasmic. The residue at position 4 (serine 4) is a Phosphoserine. The segment at 28-61 (RIAEEKAKRPKQERKDEDDENGPKPNSDLEAGKS) is disordered. Residue lysine 38 forms a Glycyl lysine isopeptide (Lys-Gly) (interchain with G-Cter in SUMO1) linkage. The I repeat unit spans residues 111-456 (ILTPFNPIRK…QQMLEQLKKQ (346 aa)). A helical membrane pass occupies residues 130–148 (LFNMLIMCTILTNCVFMTM). Residues 149–155 (SNPPDWT) are Extracellular-facing. A helical transmembrane segment spans residues 156–176 (KNVEYTFTGIYTFESLIKILA). Over 177–190 (RGFCLEDFTFLRDP) the chain is Cytoplasmic. A helical membrane pass occupies residues 191–208 (WNWLDFTVITFAYVTEFV). The Extracellular portion of the chain corresponds to 209–214 (DLGNVS). N-linked (GlcNAc...) asparagine glycosylation occurs at asparagine 212. The helical transmembrane segment at 215–231 (ALRTFRVLRALKTISVI) threads the bilayer. Residues 232–250 (PGLKTIVGALIQSVKKLSD) lie on the Cytoplasmic side of the membrane. The chain crosses the membrane as a helical span at residues 251–270 (VMILTVFCLSVFALIGLQLF). At 271–369 (MGNLRNKCLQ…PNYGYTSFDT (99 aa)) the chain is on the extracellular side. Cysteine 278 and cysteine 338 are oxidised to a cystine. N-linked (GlcNAc...) asparagine glycosylation is found at asparagine 285, asparagine 291, asparagine 297, asparagine 303, asparagine 308, and asparagine 340. The pore-forming intramembrane region spans 370-394 (FSWAFLSLFRLMTQDFWENLYQLTL). At 395–401 (RAAGKTY) the chain is on the extracellular side. The chain crosses the membrane as a helical span at residues 402-422 (MIFFVLVIFLGSFYLINLILA). Over 423 to 759 (VVAMAYEEQN…HLVNLVVMDP (337 aa)) the chain is Cytoplasmic. Residues serine 468, serine 471, serine 484, serine 526, serine 528, serine 531, serine 553, serine 554, serine 558, serine 573, serine 576, serine 589, serine 610, serine 623, serine 686, serine 687, and serine 721 each carry the phosphoserine modification. A disordered region spans residues 494–529 (SSKSEKELKNRRKKKKQKEQSGEEEKNDRVRKSESE). The segment covering 511–529 (KEQSGEEEKNDRVRKSESE) has biased composition (basic and acidic residues). The interval 590–610 (ENDFADDEHSTFEDNDSRRDS) is disordered. Positions 596–610 (DEHSTFEDNDSRRDS) are enriched in basic and acidic residues. The II repeat unit spans residues 741 to 1013 (CCKPWLKVKH…QIAVGRMQKG (273 aa)). Residues 760 to 778 (FVDLAITICIVLNTLFMAM) form a helical membrane-spanning segment. The Extracellular segment spans residues 779–789 (EHYPMTEQFSS). Residues 790 to 809 (VLSVGNLVFTGIFTAEMFLK) form a helical membrane-spanning segment. Residues 810-823 (IIAMDPYYYFQEGW) lie on the Cytoplasmic side of the membrane. A helical transmembrane segment spans residues 824-843 (NIFDGFIVSLSLMELGLANV). Residues 844-845 (EG) lie on the Extracellular side of the membrane. Residues 846-863 (LSVLRSFRLLRVFKLAKS) traverse the membrane as a helical segment. Topologically, residues 864-879 (WPTLNMLIKIIGNSVG) are cytoplasmic. A helical membrane pass occupies residues 880–898 (ALGNLTLVLAIIVFIFAVV). The Extracellular segment spans residues 899-927 (GMQLFGKSYKECVCKISNDCELPRWHMHD). A disulfide bridge connects residues cysteine 912 and cysteine 918. Residues 917 to 918 (DC) form a binds SCN2B region. The pore-forming intramembrane region spans 928–948 (FFHSFLIVFRVLCGEWIETMW). Over 949 to 961 (DCMEVAGQTMCLT) the chain is Extracellular. Cysteine 950 and cysteine 959 are disulfide-bonded. The chain crosses the membrane as a helical span at residues 962 to 982 (VFMMVMVIGNLVVLNLFLALL). Residues 983-1209 (LSSFSSDNLA…TCYKIVEHNW (227 aa)) lie on the Cytoplasmic side of the membrane. A disordered region spans residues 1120–1165 (EEFSSESDMEESKEKLNATSSSEGSTVDIGAPAEGEQPEVEPEESL). Residues 1155–1165 (EQPEVEPEESL) show a composition bias toward acidic residues. One copy of the III repeat lies at 1190–1504 (KGKLWWNLRK…KKYYNAMKKL (315 aa)). The chain crosses the membrane as a helical span at residues 1210–1227 (FETFIVFMILLSSGALAF). Topologically, residues 1228 to 1240 (EDIYIEQRKTIKT) are extracellular. A helical transmembrane segment spans residues 1241–1259 (MLEYADKVFTYIFILEMLL). The Cytoplasmic portion of the chain corresponds to 1260-1273 (KWVAYGFQVYFTNA). Residues 1274–1292 (WCWLDFLIVDVSLVSLTAN) traverse the membrane as a helical segment. The Extracellular segment spans residues 1293–1300 (ALGYSELG). Residues 1301-1319 (AIKSLRTLRALRPLRALSR) traverse the membrane as a helical segment. Topologically, residues 1320–1336 (FEGMRVVVNALLGAIPS) are cytoplasmic. The helical transmembrane segment at 1337-1356 (IMNVLLVCLIFWLIFSIMGV) threads the bilayer. Residues 1357 to 1408 (NLFAGKFYHCINYTTGEMFDVSVVNNYSECKALIESNQTARWKNVKVNFDNV) are Extracellular-facing. The cysteines at positions 1366 and 1386 are disulfide-linked. N-linked (GlcNAc...) asparagine glycosylation is found at asparagine 1368, asparagine 1382, and asparagine 1393. Positions 1409-1430 (GLGYLSLLQVATFKGWMDIMYA) form an intramembrane region, pore-forming. Residues 1431 to 1447 (AVDSRNVELQPKYEDNL) are Extracellular-facing. A helical transmembrane segment spans residues 1448 to 1469 (YMYLYFVIFIIFGSFFTLNLFI). Over 1470-1532 (GVIIDNFNQQ…MVFDFVTKQV (63 aa)) the chain is Cytoplasmic. Serine 1506 carries the post-translational modification Phosphoserine; by PKC. One copy of the IV repeat lies at 1513–1811 (IPRPANKFQG…WEKFDPDATQ (299 aa)). The chain crosses the membrane as a helical span at residues 1533 to 1550 (FDISIMILICLNMVTMMV). Residues 1551 to 1561 (ETDDQSQEMTN) lie on the Extracellular side of the membrane. The helical transmembrane segment at 1562-1580 (ILYWINLVFIVLFTGECVL) threads the bilayer. Residues 1581–1592 (KLISLRYYYFTI) are Cytoplasmic-facing. The chain crosses the membrane as a helical span at residues 1593–1610 (GWNIFDFVVVILSIVGMF). Residues 1611–1623 (LAELIEKYFVSPT) are Extracellular-facing. Residues 1624–1640 (LFRVIRLARIGRILRLI) form a helical membrane-spanning segment. Topologically, residues 1641 to 1659 (KGAKGIRTLLFALMMSLPA) are cytoplasmic. Residues 1660–1677 (LFNIGLLLFLVMFIYAIF) form a helical membrane-spanning segment. The Extracellular portion of the chain corresponds to 1678-1699 (GMSNFAYVKREVGIDDMFNFET). An intramembrane region (pore-forming) is located at residues 1700-1722 (FGNSMICLFQITTSAGWDGLLAP). Over 1723 to 1752 (ILNSGPPDCDPDKDHPGSSVKGDCGNPSVG) the chain is Extracellular. A disulfide bridge connects residues cysteine 1731 and cysteine 1746. Residues 1753–1775 (IFFFVSYIIISFLVVVNMYIAVI) traverse the membrane as a helical segment. Topologically, residues 1776-2005 (LENFSVATEE…KGKDIRESKK (230 aa)) are cytoplasmic. The 30-residue stretch at 1905–1934 (EEVSAIIIQRAYRRYLLKQKVKKVSSIYKK) folds into the IQ domain. Serine 1930 bears the Phosphoserine mark. Residues 1935–1964 (DKGKECDGTPIKEDTLIDKLNENSTPEKTD) are compositionally biased toward basic and acidic residues. The segment at 1935 to 2005 (DKGKECDGTP…KGKDIRESKK (71 aa)) is disordered. 3 positions are modified to phosphothreonine: threonine 1943, threonine 1963, and threonine 1966. Serine 1971 is subject to Phosphoserine. Over residues 1979-2005 (TKPEKEKFEKDKSEKEDKGKDIRESKK) the composition is skewed to basic and acidic residues.

It belongs to the sodium channel (TC 1.A.1.10) family. Nav1.2/SCN2A subfamily. As to quaternary structure, heterooligomer of a large alpha subunit and a smaller beta subunit. Heterooligomer with SCN2B or SCN4B; disulfide-linked. Heterooligomer with SCN1B or SCN3B; non-covalently linked. Interacts with NEDD4L. Interacts with CALM. Interacts with TMEM233. Interacts with the conotoxin GVIIJ. Interacts with the spider beta/delta-theraphotoxin-Pre1a. Interacts with the conotoxin KIIIA. Interacts with the spider protoxin-II. In terms of processing, may be ubiquitinated by NEDD4L; which would promote its endocytosis. Post-translationally, phosphorylation at Ser-1506 by PKC in a highly conserved cytoplasmic loop slows inactivation of the sodium channel and reduces peak sodium currents. Sumoylated at Lys-38. Sumoylation is induced by hypoxia, increases voltage-gated sodium current and mediates the early response to acute hypoxia in neurons. Sumoylated SCN2A is located at the cell membrane.

It localises to the cell membrane. The catalysed reaction is Na(+)(in) = Na(+)(out). In terms of biological role, mediates the voltage-dependent sodium ion permeability of excitable membranes. Assuming opened or closed conformations in response to the voltage difference across the membrane, the protein forms a sodium-selective channel through which Na(+) ions may pass in accordance with their electrochemical gradient. Implicated in the regulation of hippocampal replay occurring within sharp wave ripples (SPW-R) important for memory. In Homo sapiens (Human), this protein is Sodium channel protein type 2 subunit alpha.